Here is a 466-residue protein sequence, read N- to C-terminus: 3-isopropylmalate dehydratase large subunit (466 aa).

[4Fe-4S] cluster-binding residues include Cys347, Cys407, and Cys410.

This sequence belongs to the aconitase/IPM isomerase family. LeuC type 1 subfamily. As to quaternary structure, heterodimer of LeuC and LeuD. It depends on [4Fe-4S] cluster as a cofactor.

It catalyses the reaction (2R,3S)-3-isopropylmalate = (2S)-2-isopropylmalate. The protein operates within amino-acid biosynthesis; L-leucine biosynthesis; L-leucine from 3-methyl-2-oxobutanoate: step 2/4. Its function is as follows. Catalyzes the isomerization between 2-isopropylmalate and 3-isopropylmalate, via the formation of 2-isopropylmaleate. This is 3-isopropylmalate dehydratase large subunit from Citrobacter koseri (strain ATCC BAA-895 / CDC 4225-83 / SGSC4696).